A 362-amino-acid chain; its full sequence is F-box protein At2g14710 (362 aa).

Residues 1–47 (MAHLKNLPWELIEEILSRVPPKSLVRFRTVSKQWNALFDDKTFINNH) form the F-box domain.

The chain is F-box protein At2g14710 from Arabidopsis thaliana (Mouse-ear cress).